Consider the following 101-residue polypeptide: Co-chaperonin GroES (101 aa).

The protein belongs to the GroES chaperonin family. As to quaternary structure, heptamer of 7 subunits arranged in a ring. Interacts with the chaperonin GroEL.

It is found in the cytoplasm. Functionally, together with the chaperonin GroEL, plays an essential role in assisting protein folding. The GroEL-GroES system forms a nano-cage that allows encapsulation of the non-native substrate proteins and provides a physical environment optimized to promote and accelerate protein folding. GroES binds to the apical surface of the GroEL ring, thereby capping the opening of the GroEL channel. This is Co-chaperonin GroES from Thermus thermophilus (strain ATCC BAA-163 / DSM 7039 / HB27).